The chain runs to 415 residues: Gamma-glutamyl phosphate reductase (415 aa).

It belongs to the gamma-glutamyl phosphate reductase family.

The protein localises to the cytoplasm. It carries out the reaction L-glutamate 5-semialdehyde + phosphate + NADP(+) = L-glutamyl 5-phosphate + NADPH + H(+). Its pathway is amino-acid biosynthesis; L-proline biosynthesis; L-glutamate 5-semialdehyde from L-glutamate: step 2/2. Functionally, catalyzes the NADPH-dependent reduction of L-glutamate 5-phosphate into L-glutamate 5-semialdehyde and phosphate. The product spontaneously undergoes cyclization to form 1-pyrroline-5-carboxylate. The sequence is that of Gamma-glutamyl phosphate reductase from Listeria monocytogenes serotype 4a (strain HCC23).